A 146-amino-acid chain; its full sequence is Hemoglobin subunit delta (146 aa).

The region spanning 2 to 146 (HLTGEEKSAV…VATALAHKYH (145 aa)) is the Globin domain. Ser50 is subject to Phosphoserine. His63 and His92 together coordinate heme b.

This sequence belongs to the globin family. As to quaternary structure, heterotetramer of two delta chains and two alpha chains. Red blood cells.

The protein is Hemoglobin subunit delta (HBD) of Leontocebus nigricollis (Black-mantled tamarin).